We begin with the raw amino-acid sequence, 300 residues long: MMSGTADLAGVYAAVEESAGLLDVSCAREKVWPILAAFEDVLPTAVIAFRVATNARHEGEFDCRFTVPGSIDPYAVALDKGLTHRSGHPIETLVADVQKHCAVDSYGVDFGVVGGFKKIWVYFPGGRHESLAHLGEIPSMPPGLAATEGFFARYGLADKVDLIGVDYASKTMNVYFAASPEVVSAPTVLAMHREIGLPDPSEQMLDFCSRAFGVYTTLNWDSSKVERIAYSVKTEDPLELSARLGSKVEQFLKSVPYGIDTPKMVYAAVTAGGEEYYKLQSYYQWRTDSRLNLSYIGGRS.

It belongs to the aromatic prenyltransferase family. Monomer.

It catalyses the reaction flaviolin + (2E)-geranyl diphosphate = 3-linalylflaviolin + diphosphate. Does not require magnesium or any other divalent metal ions for activity. Functionally, involved in the biosynthesis of furanonaphthoquinone I (FNQ I). Catalyzes C- and O-prenylations of different phenolic substrates. With flaviolin as substrate, catalyzes the formation of a carbon-carbon-bond between C-3 (rather than C-1) of geranyl diphosphate and C-3 of flaviolin. With 1,3-dihydroxynaphthalene and 4-hydroxybenzoate as substrates, catalyzes O-prenylations. The polypeptide is Flaviolin linalyltransferase (Streptomyces virginiae (Streptomyces cinnamonensis)).